The following is a 333-amino-acid chain: Adenosine deaminase (333 aa).

2 residues coordinate Zn(2+): histidine 12 and histidine 14. Substrate contacts are provided by histidine 14, aspartate 16, and glycine 170. Histidine 197 contacts Zn(2+). Glutamate 200 functions as the Proton donor in the catalytic mechanism. Aspartate 278 contributes to the Zn(2+) binding site. Position 279 (aspartate 279) interacts with substrate.

It belongs to the metallo-dependent hydrolases superfamily. Adenosine and AMP deaminases family. Adenosine deaminase subfamily. It depends on Zn(2+) as a cofactor.

It catalyses the reaction adenosine + H2O + H(+) = inosine + NH4(+). The enzyme catalyses 2'-deoxyadenosine + H2O + H(+) = 2'-deoxyinosine + NH4(+). Functionally, catalyzes the hydrolytic deamination of adenosine and 2-deoxyadenosine. The protein is Adenosine deaminase of Salmonella paratyphi C (strain RKS4594).